Reading from the N-terminus, the 241-residue chain is Pyridoxine 5'-phosphate synthase (241 aa).

Asn7 contributes to the 3-amino-2-oxopropyl phosphate binding site. Residue 9–10 (DH) coordinates 1-deoxy-D-xylulose 5-phosphate. Arg18 contributes to the 3-amino-2-oxopropyl phosphate binding site. Residue His43 is the Proton acceptor of the active site. Arg45 and His50 together coordinate 1-deoxy-D-xylulose 5-phosphate. Glu70 functions as the Proton acceptor in the catalytic mechanism. Position 100 (Thr100) interacts with 1-deoxy-D-xylulose 5-phosphate. The active-site Proton donor is the His191. 3-amino-2-oxopropyl phosphate-binding positions include Gly192 and 213–214 (GH).

This sequence belongs to the PNP synthase family. In terms of assembly, homooctamer; tetramer of dimers.

The protein localises to the cytoplasm. The catalysed reaction is 3-amino-2-oxopropyl phosphate + 1-deoxy-D-xylulose 5-phosphate = pyridoxine 5'-phosphate + phosphate + 2 H2O + H(+). It participates in cofactor biosynthesis; pyridoxine 5'-phosphate biosynthesis; pyridoxine 5'-phosphate from D-erythrose 4-phosphate: step 5/5. Catalyzes the complicated ring closure reaction between the two acyclic compounds 1-deoxy-D-xylulose-5-phosphate (DXP) and 3-amino-2-oxopropyl phosphate (1-amino-acetone-3-phosphate or AAP) to form pyridoxine 5'-phosphate (PNP) and inorganic phosphate. The polypeptide is Pyridoxine 5'-phosphate synthase (Nitrosospira multiformis (strain ATCC 25196 / NCIMB 11849 / C 71)).